The following is a 437-amino-acid chain: 26S proteasome regulatory subunit 4 homolog (437 aa).

The segment at 1–47 (MGQGVSSGQDKKKKKGSNQKPKYEPPVQSKFGRKKRKGGPATAEKLP) is disordered. Gly2 is lipidated: N-myristoyl glycine. Residue 223-230 (GAPGTGKT) participates in ATP binding. Residues Lys234, Lys255, and Lys290 each participate in a glycyl lysine isopeptide (Lys-Gly) (interchain with G-Cter in ubiquitin) cross-link.

This sequence belongs to the AAA ATPase family.

The protein localises to the cytoplasm. The protein resides in the nucleus. Functionally, the 26S proteasome is involved in the ATP-dependent degradation of ubiquitinated proteins. The regulatory (or ATPase) complex confers ATP dependency and substrate specificity to the 26S complex. Has ATPase activity. This Saccharomyces cerevisiae (strain ATCC 204508 / S288c) (Baker's yeast) protein is 26S proteasome regulatory subunit 4 homolog (RPT2).